The following is a 578-amino-acid chain: Acyl-coenzyme A synthetase ACSM5, mitochondrial (578 aa).

A mitochondrion-targeting transit peptide spans 1–22 (MRLWLRGLVYQARRSSWGVFRI). Position 96 is an N6-acetyllysine; alternate (lysine 96). Lysine 96 is subject to N6-succinyllysine; alternate. N6-acetyllysine is present on lysine 151. 229–237 (TSGTTGTPK) serves as a coordination point for ATP. Lysine 335 is subject to N6-acetyllysine. ATP-binding positions include 367 to 372 (EGYGQS), aspartate 454, arginine 469, and lysine 565.

The protein belongs to the ATP-dependent AMP-binding enzyme family. Mg(2+) is required as a cofactor. The cofactor is Mn(2+).

It localises to the mitochondrion matrix. It carries out the reaction a medium-chain fatty acid + ATP + CoA = a medium-chain fatty acyl-CoA + AMP + diphosphate. In terms of biological role, catalyzes the activation of fatty acids by CoA to produce an acyl-CoA, the first step in fatty acid metabolism. This is Acyl-coenzyme A synthetase ACSM5, mitochondrial (Acsm5) from Rattus norvegicus (Rat).